We begin with the raw amino-acid sequence, 121 residues long: MATEIPPAVRNDLDRLRQLEDQLQAVLLRKQQYEGELRNVDKALNELNKLPQDSKVYKVVGTFLLSTTRDEAIQDLNQRKELLDLHLQSLVKQENMLRKQISELENKVKQVLAAGQGGQVQ.

Belongs to the prefoldin subunit beta family. As to quaternary structure, heterohexamer of two alpha and four beta subunits.

The protein localises to the cytoplasm. Molecular chaperone capable of stabilizing a range of proteins. Seems to fulfill an ATP-independent, HSP70-like function in archaeal de novo protein folding. The chain is Prefoldin subunit beta from Caldivirga maquilingensis (strain ATCC 700844 / DSM 13496 / JCM 10307 / IC-167).